A 959-amino-acid polypeptide reads, in one-letter code: DNA translocase FtsK 1 (959 aa).

The next 3 helical transmembrane spans lie at Met1–Val21, Ile39–Gly59, and Gly83–Phe103. Topologically, residues Gly104 to Asp959 are cytoplasmic. The disordered stretch occupies residues Pro122–Ala427. Basic and acidic residues predominate over residues Asp126 to Leu136. Composition is skewed to low complexity over residues Ala220–Pro229 and Ala264–Ala286. The span at Ser287–Pro298 shows a compositional bias: pro residues. Residues Pro333 to Ala379 are compositionally biased toward acidic residues. Positions Glu380–Pro403 are enriched in low complexity. The FtsK domain maps to Gly605–Arg814. Gly625–Val630 provides a ligand contact to ATP.

The protein belongs to the FtsK/SpoIIIE/SftA family. Homohexamer. Forms a ring that surrounds DNA.

Its subcellular location is the cell inner membrane. Functionally, essential cell division protein that coordinates cell division and chromosome segregation. The N-terminus is involved in assembly of the cell-division machinery. The C-terminus functions as a DNA motor that moves dsDNA in an ATP-dependent manner towards the dif recombination site, which is located within the replication terminus region. Translocation stops specifically at Xer-dif sites, where FtsK interacts with the Xer recombinase, allowing activation of chromosome unlinking by recombination. FtsK orienting polar sequences (KOPS) guide the direction of DNA translocation. FtsK can remove proteins from DNA as it translocates, but translocation stops specifically at XerCD-dif site, thereby preventing removal of XerC and XerD from dif. The polypeptide is DNA translocase FtsK 1 (ftsK1) (Ralstonia nicotianae (strain ATCC BAA-1114 / GMI1000) (Ralstonia solanacearum)).